The chain runs to 514 residues: 6-phosphofructo-2-kinase/fructose-2,6-bisphosphatase 3 (514 aa).

Residues 1-245 (MPLELTQSRV…VYYLMNIHVQ (245 aa)) are 6-phosphofructo-2-kinase. 42-50 (GLPARGKTY) contacts ATP. Beta-D-fructose 6-phosphate-binding residues include arginine 75 and arginine 99. Aspartate 125 is a catalytic residue. Beta-D-fructose 6-phosphate is bound by residues threonine 127 and arginine 133. Residue cysteine 155 is part of the active site. 164–169 (NIMEVK) is a binding site for ATP. Residues lysine 169, arginine 190, and tyrosine 194 each coordinate beta-D-fructose 6-phosphate. The fructose-2,6-bisphosphatase stretch occupies residues 246-514 (PRTIYLCRHG…QPLLGQACLT (269 aa)). Arginine 253 is a binding site for beta-D-fructose 2,6-bisphosphate. Histidine 254 serves as the catalytic Tele-phosphohistidine intermediate. Beta-D-fructose 2,6-bisphosphate-binding residues include asparagine 260 and glycine 266. The active-site Proton donor/acceptor is glutamate 323. Tyrosine 334, arginine 348, lysine 352, tyrosine 363, glutamine 389, and arginine 393 together coordinate beta-D-fructose 2,6-bisphosphate. 345 to 348 (YALR) lines the ATP pocket. Residues 389 to 393 (QAVLR) and tyrosine 425 each bind ATP. Residues 444-475 (ERSEDAKKGPNPLMRRNSVTPLASPEPTKKPR) form a disordered region. Serine 461 bears the Phosphoserine; by AMPK and PKA mark. Threonine 463 bears the Phosphothreonine mark. Serine 467 carries the post-translational modification Phosphoserine. At threonine 471 the chain carries Phosphothreonine; by PKC.

This sequence in the C-terminal section; belongs to the phosphoglycerate mutase family. Homodimer. Forms a heterodimer with PFKFB2. In terms of processing, phosphorylation by AMPK stimulates activity.

The enzyme catalyses beta-D-fructose 2,6-bisphosphate + H2O = beta-D-fructose 6-phosphate + phosphate. It catalyses the reaction beta-D-fructose 6-phosphate + ATP = beta-D-fructose 2,6-bisphosphate + ADP + H(+). Catalyzes both the synthesis and degradation of fructose 2,6-bisphosphate. This chain is 6-phosphofructo-2-kinase/fructose-2,6-bisphosphatase 3 (PFKFB3), found in Pongo abelii (Sumatran orangutan).